The sequence spans 289 residues: Protease HtpX homolog (289 aa).

The next 2 helical transmembrane spans lie at 9–29 (TGVL…LIGG) and 31–51 (GGMI…YWFS). Residue His-133 participates in Zn(2+) binding. Residue Glu-134 is part of the active site. His-137 is a Zn(2+) binding site. The next 2 helical transmembrane spans lie at 143-163 (TLIQ…VDFA) and 182-202 (IGLI…QLAI). Zn(2+) is bound at residue Glu-207.

Belongs to the peptidase M48B family. Zn(2+) serves as cofactor.

It localises to the cell membrane. The chain is Protease HtpX homolog from Pyrococcus abyssi (strain GE5 / Orsay).